The primary structure comprises 508 residues: Cobalamin biosynthesis protein CobIJ (508 aa).

The segment at 1-243 (MSARGTLWGV…AMLPGGRRRA (243 aa)) is precorrin-2 C20-methyltransferase. The segment at 244-508 (LLTGTVAVVG…TATKSSRHSD (265 aa)) is precorrin-3 methylase. Positions 489-508 (PRRYPEAGRATATKSSRHSD) are disordered.

This sequence belongs to the precorrin methyltransferase family.

It catalyses the reaction precorrin-2 + S-adenosyl-L-methionine = precorrin-3A + S-adenosyl-L-homocysteine + H(+). It carries out the reaction precorrin-3B + S-adenosyl-L-methionine = precorrin-4 + S-adenosyl-L-homocysteine + 3 H(+). It functions in the pathway cofactor biosynthesis; adenosylcobalamin biosynthesis; cob(II)yrinate a,c-diamide from precorrin-2 (aerobic route): step 1/10. Its pathway is cofactor biosynthesis; adenosylcobalamin biosynthesis; cob(II)yrinate a,c-diamide from precorrin-2 (aerobic route): step 3/10. In terms of biological role, methylates precorrin-2 at the C-20 position to produce precorrin-3A. The protein is Cobalamin biosynthesis protein CobIJ (cobIJ) of Mycobacterium bovis (strain ATCC BAA-935 / AF2122/97).